Here is a 250-residue protein sequence, read N- to C-terminus: Aquaporin (250 aa).

The Cytoplasmic segment spans residues methionine 1 to glutamate 15. Residues methionine 16–threonine 36 traverse the membrane as a helical segment. Residues glutamate 37 to arginine 42 lie on the Extracellular side of the membrane. Residues valine 43–valine 63 form a helical membrane-spanning segment. The Cytoplasmic segment spans residues threonine 64–arginine 86. The short motif at asparagine 69–alanine 71 is the NPA element. The chain crosses the membrane as a helical span at residues glycine 87–proline 107. Topologically, residues cysteine 108–asparagine 133 are extracellular. A helical transmembrane segment spans residues valine 134 to valine 154. Residues asparagine 155–arginine 179 are Cytoplasmic-facing. A helical transmembrane segment spans residues isoleucine 180–serine 200. The Extracellular segment spans residues serine 201–tryptophan 224. Residues asparagine 206 to glycine 208 carry the NPG motif. Residues alanine 225 to leucine 245 form a helical membrane-spanning segment. The Cytoplasmic portion of the chain corresponds to tyrosine 246–phenylalanine 250.

This sequence belongs to the MIP/aquaporin (TC 1.A.8) family.

It is found in the cell membrane. In terms of biological role, water channel required to facilitate the transport of water across membranes. Involved in osmotolerance. This is Aquaporin (AQP) from Encephalitozoon cuniculi (strain GB-M1) (Microsporidian parasite).